The primary structure comprises 482 residues: LHPQQALAQTAGRPLADVVGKTLCTYSKTAKRQAANLAQTLQRASSAAKQSRQAQQLAALALAKLPDYKEAAATLLIYATHKIQDAQASIENWTGENTKLVGQAMYSSGRIDELMLLLEGHREDGANGQDKTCLGAAAGGNTVNEFVKTECDTESGHNIEADNSNIGQAATTLSQESTDPEASGGASCKITANLATDYDSHANELPLLGGLLTIHNAGGFKTGQSLQTAAPTNKLISALKNKGAGVAAKLATVTSAAPTSKQELKTLLASKGERAKLQAANDEYNNWKPGAKPEDFDAHIKKVFGAEDGKDSAYALALEGISIEVPQKPGTTESKQLYSMQPKDLMAALIGTIAEIQKAAATKAPCPKHKLTSAESDALCSKIKDANECNSKPFCSYNSTETDTAKKCQFNETKADKSGVSLPKTGPTGTEATTDKCKDKTKDECKSPNCKWEGETCKDSSILVTKKFALSLVSAAFASLLF.

The first 8 residues, 1–8 (LHPQQALA), serve as a signal peptide directing secretion. Cystine bridges form between cysteine 24–cysteine 151 and cysteine 133–cysteine 188. Asparagine 92 carries an N-linked (GlcNAc...) asparagine glycan. Asparagine 398 and asparagine 411 each carry an N-linked (GlcNAc...) asparagine glycan. Aspartate 459 carries the GPI-anchor amidated aspartate lipid modification. The propeptide at 460–482 (SSILVTKKFALSLVSAAFASLLF) is removed in mature form.

It is found in the cell membrane. In terms of biological role, VSG forms a coat on the surface of the parasite. The trypanosome evades the immune response of the host by expressing a series of antigenically distinct VSGs from an estimated 1000 VSG genes. In Trypanosoma brucei brucei, this protein is Variant surface glycoprotein ANTAT 1.1C.